Reading from the N-terminus, the 202-residue chain is Nucleoid occlusion factor SlmA (202 aa).

Residues 14–75 (KERQQQVLEV…ALIERIEQTL (62 aa)) form the HTH tetR-type domain. The segment at residues 38–57 (TTERLAKAVGVSEGALYRYF) is a DNA-binding region (H-T-H motif).

The protein belongs to the nucleoid occlusion factor SlmA family. Homodimer. Interacts with FtsZ.

Its subcellular location is the cytoplasm. The protein localises to the nucleoid. Required for nucleoid occlusion (NO) phenomenon, which prevents Z-ring formation and cell division over the nucleoid. Acts as a DNA-associated cell division inhibitor that binds simultaneously chromosomal DNA and FtsZ, and disrupts the assembly of FtsZ polymers. SlmA-DNA-binding sequences (SBS) are dispersed on non-Ter regions of the chromosome, preventing FtsZ polymerization at these regions. In Actinobacillus pleuropneumoniae serotype 5b (strain L20), this protein is Nucleoid occlusion factor SlmA.